The chain runs to 429 residues: Ribosomal RNA small subunit methyltransferase B (429 aa).

Residues 254–260 (CAAPGGK), aspartate 277, aspartate 303, and aspartate 322 each bind S-adenosyl-L-methionine. Cysteine 375 (nucleophile) is an active-site residue.

Belongs to the class I-like SAM-binding methyltransferase superfamily. RsmB/NOP family.

The protein resides in the cytoplasm. The catalysed reaction is cytidine(967) in 16S rRNA + S-adenosyl-L-methionine = 5-methylcytidine(967) in 16S rRNA + S-adenosyl-L-homocysteine + H(+). Its function is as follows. Specifically methylates the cytosine at position 967 (m5C967) of 16S rRNA. This is Ribosomal RNA small subunit methyltransferase B from Pectobacterium atrosepticum (strain SCRI 1043 / ATCC BAA-672) (Erwinia carotovora subsp. atroseptica).